The sequence spans 350 residues: Atypical chemokine receptor 4 (350 aa).

Over 1–42 the chain is Extracellular; it reads MALEQNQSTDYYYEENEMNGTYDYSQYELICIKEDVREFAKV. Asn-6 and Asn-19 each carry an N-linked (GlcNAc...) asparagine glycan. Residues 43–63 traverse the membrane as a helical segment; sequence FLPVFLTIVFVIGLAGNSMVV. Over 64–87 the chain is Cytoplasmic; that stretch reads AIYAYYKKQRTKTDVYILNLAVAD. Residues 88-108 form a helical membrane-spanning segment; the sequence is LLLLFTLPFWAVNAVHGWVLG. Topologically, residues 109–113 are extracellular; that stretch reads KIMCK. Cys-112 and Cys-184 are oxidised to a cystine. The chain crosses the membrane as a helical span at residues 114-134; it reads ITSALYTLNFVSGMQFLACIS. The Cytoplasmic portion of the chain corresponds to 135–154; sequence IDRYVAVTKVPSQSGVGKPC. A helical membrane pass occupies residues 155 to 175; sequence WIICFCVWMAAILLSIPQLVF. The Extracellular segment spans residues 176–201; sequence YTVNDNARCIPIFPRYLGTSMKALIQ. Residues 202 to 222 traverse the membrane as a helical segment; sequence MLEICIGFVVPFLIMGVCYFI. Residues 223–240 lie on the Cytoplasmic side of the membrane; sequence TARTLMKMPNIKISRPLK. A helical transmembrane segment spans residues 241 to 261; that stretch reads VLLTVVIVFIVTQLPYNIVKF. The Extracellular segment spans residues 262–289; sequence CRAIDIIYSLITSCNMSKRMDIAIQVTE. Residues 290–310 form a helical membrane-spanning segment; that stretch reads SIALFHSCLNPILYVFMGASF. The Cytoplasmic segment spans residues 311-350; it reads KNYVMKVAKKYGSWRRQRQSVEEFPFDSEGPTEPTSTFSI.

This sequence belongs to the G-protein coupled receptor 1 family. Atypical chemokine receptor subfamily. Forms heteromers with CXCR3. Interacts with ARRB1 and ARRB2. Post-translationally, the Ser/Thr residues in the C-terminal cytoplasmic tail may be phosphorylated. In terms of tissue distribution, predominantly expressed in heart. Lower expression in lung, pancreas, spleen, colon, skeletal muscle and small intestine.

It localises to the early endosome. It is found in the recycling endosome. The protein resides in the cell membrane. Atypical chemokine receptor that controls chemokine levels and localization via high-affinity chemokine binding that is uncoupled from classic ligand-driven signal transduction cascades, resulting instead in chemokine sequestration, degradation, or transcytosis. Also known as interceptor (internalizing receptor) or chemokine-scavenging receptor or chemokine decoy receptor. Acts as a receptor for chemokines CCL2, CCL8, CCL13, CCL19, CCL21 and CCL25. Chemokine-binding does not activate G-protein-mediated signal transduction but instead induces beta-arrestin recruitment, leading to ligand internalization. Plays an important role in controlling the migration of immune and cancer cells that express chemokine receptors CCR7 and CCR9, by reducing the availability of CCL19, CCL21, and CCL25 through internalization. Negatively regulates CXCR3-induced chemotaxis. Regulates T-cell development in the thymus. The chain is Atypical chemokine receptor 4 (ACKR4) from Homo sapiens (Human).